A 291-amino-acid polypeptide reads, in one-letter code: Polyamine aminopropyltransferase (291 aa).

The PABS domain occupies 5–245 (PGPIVLMEPL…YAVNFVLGSL (241 aa)). Glutamine 36 is an S-methyl-5'-thioadenosine binding site. Residues histidine 67 and glutamate 91 each contribute to the spermidine site. Residues aspartate 111 and 143 to 144 (DG) each bind S-methyl-5'-thioadenosine. The active-site Proton acceptor is aspartate 164.

It belongs to the spermidine/spermine synthase family. As to quaternary structure, homodimer or homotetramer.

Its subcellular location is the cytoplasm. It catalyses the reaction norspermidine + S-adenosyl 3-(methylsulfanyl)propylamine = norspermine + S-methyl-5'-thioadenosine + H(+). The catalysed reaction is S-adenosyl 3-(methylsulfanyl)propylamine + spermidine = thermospermine + S-methyl-5'-thioadenosine + H(+). Its function is as follows. Involved in the biosynthesis of polyamines which are thought to support the growth of thermophilic microorganisms under high-temperature conditions. It seems that long-chain and branched-chain of polyamines effectively stabilize DNA and RNA, respectively. Catalyzes the irreversible transfer of a propylamine group from the amino donor S-adenosylmethioninamine (decarboxy-AdoMet) to norspermidine and 1,3-diaminopropane to yield norspermine, and to spermidine to yield thermospermine. It can also synthesize thermospermine from putrescine (1,4-diaminobutane) and caldopentamine from norspermine with a very low activity. The biosynthesis of caldohexamine and caldoheptamine from caldopentamine has been also observed. The chain is Polyamine aminopropyltransferase from Pyrobaculum aerophilum (strain ATCC 51768 / DSM 7523 / JCM 9630 / CIP 104966 / NBRC 100827 / IM2).